The primary structure comprises 100 residues: Large ribosomal subunit protein uL23 (100 aa).

This sequence belongs to the universal ribosomal protein uL23 family. As to quaternary structure, part of the 50S ribosomal subunit. Contacts protein L29, and trigger factor when it is bound to the ribosome.

Functionally, one of the early assembly proteins it binds 23S rRNA. One of the proteins that surrounds the polypeptide exit tunnel on the outside of the ribosome. Forms the main docking site for trigger factor binding to the ribosome. The sequence is that of Large ribosomal subunit protein uL23 from Synechococcus elongatus (strain ATCC 33912 / PCC 7942 / FACHB-805) (Anacystis nidulans R2).